The chain runs to 158 residues: Endoribonuclease YbeY (158 aa).

Residues histidine 117, histidine 121, and histidine 127 each coordinate Zn(2+).

This sequence belongs to the endoribonuclease YbeY family. It depends on Zn(2+) as a cofactor.

It localises to the cytoplasm. In terms of biological role, single strand-specific metallo-endoribonuclease involved in late-stage 70S ribosome quality control and in maturation of the 3' terminus of the 16S rRNA. The sequence is that of Endoribonuclease YbeY from Psychromonas ingrahamii (strain DSM 17664 / CCUG 51855 / 37).